Here is a 518-residue protein sequence, read N- to C-terminus: Forkhead box protein H1 (518 aa).

The tract at residues 72 to 113 (GSMYGLSPGTHEGSCTHTHEGPKDSMAGDQTRSRKSKKKNYH) is disordered. Residues 104 to 113 (SRKSKKKNYH) are compositionally biased toward basic residues. Residues 117-213 (KPPYSYLAMI…MKLQNTALTR (97 aa)) constitute a DNA-binding region (fork-head). The interval 318–397 (KPTRNARSPG…NYSPIEPPKK (80 aa)) is disordered. Residues 329 to 346 (STIHSTYSSSSSSISTIS) are compositionally biased toward low complexity. The segment at 380–506 (TSSDPDTGNY…PSFLSQCLGS (127 aa)) is SMAD-interaction domain (SID). A Fast/FoxH1 motif 1 (FM1) motif is present at residues 405 to 409 (LPTSY). Residues 415 to 421 (PNVVAPP) carry the Fast/FoxH1 motif 2 (FM2) motif. The SMAD interaction motif (SIM) signature appears at 470–491 (LDNMLRAMPPNKSVFDVLTSHP).

In terms of assembly, ARF1 contains 2 smad2s, 1 smad4 and 1 foxh1/fast-1 protein. Interaction with smad4 is most likely indirect through interaction with the MH2 domain of smad2. Binds to the MH2 domain of smad3, which can incorporate into the ARF1 complex. The ARF1 and ARF2 complexes are activated by distinct TGF-beta family members; formation of ARF1 is promoted by activin. Interacts (via Fork-head domain) with gtf2ird1/wbscr11 (via repeats 4-5). Highly expressed in the animal cap (prospective ectoderm) and prospective mesoderm of stage 10.25 embryos.

The protein resides in the nucleus. Transcriptional activator. Recognizes and binds to the DNA sequence 5'-TGT[GT][GT]ATT-3'. Upon TGF-beta induction, forms a transcriptionally active complex with smad2 and smad4 called activin-responsive factor 1 (ARF1), which binds a site on the mix-B/mix.2 promoter called the activin response element (ARE). Binds to activated smads and the ARE with much lower affinity than fast3. Necessary for the first steps in mesoderm specification, directly inducing mesodermal genes. Acts with fast3 to control the convergent extension movements of gastrulation. Binds to the proximal element (PE) of the gsc gene and cooperates with gtf2ird1/wbscr11 and SMAD proteins to regulate gsc transcription. This Xenopus laevis (African clawed frog) protein is Forkhead box protein H1 (foxh1).